A 352-amino-acid polypeptide reads, in one-letter code: S-adenosylmethionine:tRNA ribosyltransferase-isomerase (352 aa).

This sequence belongs to the QueA family. In terms of assembly, monomer.

The protein localises to the cytoplasm. It carries out the reaction 7-aminomethyl-7-carbaguanosine(34) in tRNA + S-adenosyl-L-methionine = epoxyqueuosine(34) in tRNA + adenine + L-methionine + 2 H(+). Its pathway is tRNA modification; tRNA-queuosine biosynthesis. Transfers and isomerizes the ribose moiety from AdoMet to the 7-aminomethyl group of 7-deazaguanine (preQ1-tRNA) to give epoxyqueuosine (oQ-tRNA). The protein is S-adenosylmethionine:tRNA ribosyltransferase-isomerase of Allorhizobium ampelinum (strain ATCC BAA-846 / DSM 112012 / S4) (Agrobacterium vitis (strain S4)).